The sequence spans 469 residues: MVVDGKTTRLRASCNACNESKVRCSQRKPTCARCERNGVECIYGLSRRTHKDAPPISMPPSQRSHNHPRGASRSSSSGGDTKANSNSSSNWHMSPNVPFMIPPQQQQQQQKDEAAAAAAATPRFQCMYTPQDATADTVNRAGLLLDMDFSSLVTGSSSPLTSVDPLSAAVTRFPTPGAEHTNPWALGPFFGGNTNNNSINNPDWTRQPTTMGPMITVPTTAPPSPSPSCTECSCHAGVTELLSSMRGGGDDRRLSLDAQLAKLKRCIVSSETSMGCAHGRDDAEPIHILAVSTLIGYVIDEFEMLASESPLRLSSSLADMSGSRNAERVAESILSSGSDESMSMSSMAATTGVNNMSMSMSMGNLLEPRLSWGVLELEDDDEVDLRQRLYLLSFRKLERLLSQLTIYLRNLHDARAGLPEPSRHMAFVMACDYTRLWLEKKAEDVKRMFLVARPAGDETMDPALMFTAH.

The zn(2)-C6 fungal-type DNA-binding region spans 14 to 41; the sequence is CNACNESKVRCSQRKPTCARCERNGVEC. A disordered region spans residues 49–118; it reads THKDAPPISM…QQKDEAAAAA (70 aa). Residues 82–93 are compositionally biased toward polar residues; it reads KANSNSSSNWHM. Over residues 104–118 the composition is skewed to low complexity; sequence QQQQQQQKDEAAAAA.

Its subcellular location is the nucleus. Its function is as follows. Transcription factor; part of the gene cluster that mediates the biosynthesis of the phomopsins, a group of hexapeptide mycotoxins which infects lupins and causes lupinosis disease in livestock. May play a role in the regulation of the production of phomopsins. The chain is Transcription factor phomD' from Diaporthe leptostromiformis (Lupinosis disease fungus).